The sequence spans 512 residues: Glycerol kinase (512 aa).

Residue Thr13 coordinates ADP. Positions 13, 14, and 15 each coordinate ATP. Thr13 is a binding site for sn-glycerol 3-phosphate. Arg17 lines the ADP pocket. Sn-glycerol 3-phosphate contacts are provided by Arg83, Glu84, Tyr135, and Asp252. Arg83, Glu84, Tyr135, Asp252, and Gln253 together coordinate glycerol. Thr274 and Gly318 together coordinate ADP. ATP-binding residues include Thr274, Gly318, Gln322, and Gly419. ADP contacts are provided by Gly419 and Asn423.

The protein belongs to the FGGY kinase family.

It catalyses the reaction glycerol + ATP = sn-glycerol 3-phosphate + ADP + H(+). The protein operates within polyol metabolism; glycerol degradation via glycerol kinase pathway; sn-glycerol 3-phosphate from glycerol: step 1/1. Its activity is regulated as follows. Inhibited by fructose 1,6-bisphosphate (FBP). Its function is as follows. Key enzyme in the regulation of glycerol uptake and metabolism. Catalyzes the phosphorylation of glycerol to yield sn-glycerol 3-phosphate. The protein is Glycerol kinase of Corynebacterium kroppenstedtii (strain DSM 44385 / JCM 11950 / CIP 105744 / CCUG 35717).